Here is an 8903-residue protein sequence, read N- to C-terminus: Nonribosomal peptide synthetase vlms (8903 aa).

Residues 11–84 (GSCRTTLGKV…ELADSIDEQN (74 aa)) form the Carrier 1 domain. Residues 13–81 (CRTTLGKVAA…TLAELADSID (69 aa)) form a thiolation (T) domain 1 region. Residue S45 is modified to O-(pantetheine 4'-phosphoryl)serine. Adenylation (A) domain regions lie at residues 59-736 (GIWV…SHLP) and 989-1386 (MAAQ…IKIR). The interval 572 to 953 (VPHQLDTEKL…FLLDGVNMSI (382 aa)) is condensation (C) domain 1. Residues 1524 to 1600 (SSMSTVEQEL…QLALAAESQA (77 aa)) enclose the Carrier 2 domain. The interval 1529-1597 (VEQELRQIWS…TIPQLALAAE (69 aa)) is thiolation (T) domain 2. O-(pantetheine 4'-phosphoryl)serine is present on S1561. The interval 1613 to 2050 (FPLSPIQKMY…TVKELAAVSA (438 aa)) is epimerase (E) domain 1. Residues 2091–2523 (DILPCSPIQQ…LLSVSEENKL (433 aa)) are condensation (C) domain 2. The adenylation (A) domain 2 stretch occupies residues 2546 to 2943 (MSSHADATAI…GRQDSQVKIR (398 aa)). Residues 3084–3160 (LFTTAIERQL…ELALQAKMVD (77 aa)) enclose the Carrier 3 domain. Positions 3089–3157 (IERQLRQVWS…TIPELALQAK (69 aa)) are thiolation (T) domain 3. O-(pantetheine 4'-phosphoryl)serine is present on S3121. The tract at residues 3174-3614 (FALSPIQQMY…AIKSLVEELM (441 aa)) is epimerase (E) domain 2. Residues 3655 to 4093 (EDILPCSPMQ…LMSTKDIQQL (439 aa)) are condensation (C) domain 3. The adenylation (A) domain 3 stretch occupies residues 4114–4512 (ERLNTQPESM…GRIDTQIKIR (399 aa)). Residues 4649-4725 (APRTTMEKKL…DLAEATELKC (77 aa)) form the Carrier 4 domain. The segment at 4654 to 4722 (MEKKLRDLFA…ILADLAEATE (69 aa)) is thiolation (T) domain 4. S4686 is modified (O-(pantetheine 4'-phosphoryl)serine). The tract at residues 4775–5191 (EDVYPCSPLQ…AQLQMLSEED (417 aa)) is condensation (C) domain 4. The adenylation (A) domain 4 stretch occupies residues 5216 to 5614 (ETMTSQPDAP…GRRDTQVKIR (399 aa)). Positions 5753 to 5829 (APTTAMEKRL…DLAQELEQRH (77 aa)) constitute a Carrier 5 domain. The tract at residues 5758 to 5826 (MEKRLQNLFC…RLGDLAQELE (69 aa)) is thiolation (T) domain 5. S5790 bears the O-(pantetheine 4'-phosphoryl)serine mark. Position 5875 (E5875) is a region of interest, condensation (C) domain 5. Positions 6311–6702 (EEQMSLRPSE…GRMDGQIKIR (392 aa)) are adenylation (A) domain 5. The Carrier 6 domain occupies 6836–6912 (SSATNTERQL…ELAATLEVMD (77 aa)). Residues 6841 to 6909 (TERQLRQIWS…TIPELAATLE (69 aa)) are thiolation (T) domain 6. Position 6873 is an O-(pantetheine 4'-phosphoryl)serine (S6873). An epimerase (E) domain 3 region spans residues 6923–7349 (GFFELSPIQR…YGRTIKTLVE (427 aa)). The segment at 7391-7823 (EDILPCSPIQ…LVLTNDEAQI (433 aa)) is condensation (C) domain 6. The interval 7844–8240 (EQMARKPEAQ…LDRIGTQVKI (397 aa)) is adenylation (A) domain 6. The region spanning 8368–8444 (APISATEAVF…AMAACVSDVS (77 aa)) is the Carrier 7 domain. The tract at residues 8369–8441 (PISATEAVFC…VLHAMAACVS (73 aa)) is thiolation (T) domain 7. S8405 is modified (O-(pantetheine 4'-phosphoryl)serine). The segment at 8482-8897 (DVLPTTEFQT…MENPRSTVGH (416 aa)) is condensation (C) domain 7.

This sequence belongs to the NRP synthetase family.

The protein operates within secondary metabolite biosynthesis. Nonribosomal peptide synthetase; part of the gene cluster that mediates the biosynthesis of verlamelin, a lipopeptide that exhibits antifungal activity against plant pathogenic fungi. Verlamelin is a cyclic hexadepsipeptide and is bridged by ester bonding between a 5-hydroxytetradecanoic acid moiety and a carboxyl group on the terminal Val of amide-bonded tetradecanoyl-hexapeptide D-allo-Thr-D-Ala-L-Pro-L-Gln-D-Tyr-L-Val. VlmA and vlmB are altogether regarded as essential components in the biosynthesis of 5-hydroxytetradecanoic acid. VlmA catalyzes the hydroxylation at position C5 of tetradecanoic acid produced in primary metabolism, while the precise function of vlmB still remains to be solved. To be loaded onto the waiting NRPS, 5-hydroxytetradecanoic acid is activated in the form of acyladenylate by the AMP-dependent ligase vlmC. VlmS seems to accept the fatty-acyl intermediate onto the initial module to further elongate amino acid residues by the downstream modules. In addition, in the last module at its C-terminus, vlmS contains a surplus condensation (C) domain that may be involved in cyclization, the last step to form verlamelin. This is Nonribosomal peptide synthetase vlms from Lecanicillium sp.